Reading from the N-terminus, the 161-residue chain is MPSMDIVSEVNEVELRNAVDNSVRELKSRFDFRGKEASIEYKDHVVTLSAEDDFQCQQLVDILRMQMSKRNVDPKSMDVDDKAVHSGKTFSLRVKFKEGIETLIAKKLVKLIKDSKLKVQSSIQGDSVRVTGKKRDDLQAVMALAREADLGQPFQFNNFRD.

This sequence belongs to the YajQ family.

Nucleotide-binding protein. The protein is Nucleotide-binding protein swp_1151 of Shewanella piezotolerans (strain WP3 / JCM 13877).